The sequence spans 281 residues: 2,3,4,5-tetrahydropyridine-2,6-dicarboxylate N-succinyltransferase (281 aa).

Residues R108 and D145 each coordinate substrate.

The protein belongs to the transferase hexapeptide repeat family. As to quaternary structure, homotrimer.

The protein resides in the cytoplasm. It carries out the reaction (S)-2,3,4,5-tetrahydrodipicolinate + succinyl-CoA + H2O = (S)-2-succinylamino-6-oxoheptanedioate + CoA. It functions in the pathway amino-acid biosynthesis; L-lysine biosynthesis via DAP pathway; LL-2,6-diaminopimelate from (S)-tetrahydrodipicolinate (succinylase route): step 1/3. The chain is 2,3,4,5-tetrahydropyridine-2,6-dicarboxylate N-succinyltransferase from Rhodopseudomonas palustris (strain BisB5).